A 414-amino-acid polypeptide reads, in one-letter code: Ribulose bisphosphate carboxylase/oxygenase activase (414 aa).

37–44 (GRKGEGKT) is an ATP binding site. The segment at 296–326 (RGYQTAPPPEAPVIQPVNNSSHKQKTSNTHL) is disordered. Residues 311–326 (PVNNSSHKQKTSNTHL) show a composition bias toward polar residues.

Belongs to the RuBisCO activase family.

Its function is as follows. Activation of RuBisCO (ribulose-1,5-bisohosphate carboxylase/oxygenase; EC 4.1.1.39) involves the ATP-dependent carboxylation of the epsilon-amino group of lysine leading to a carbamate structure. In Nostoc sp. (strain PCC 7120 / SAG 25.82 / UTEX 2576), this protein is Ribulose bisphosphate carboxylase/oxygenase activase (rca).